The following is a 311-amino-acid chain: tRNA dimethylallyltransferase (311 aa).

14–21 lines the ATP pocket; that stretch reads GPTAVGKT. 16–21 contacts substrate; that stretch reads TAVGKT. Positions 39-42 are interaction with substrate tRNA; it reads DSMQ.

Belongs to the IPP transferase family. In terms of assembly, monomer. Requires Mg(2+) as cofactor.

It catalyses the reaction adenosine(37) in tRNA + dimethylallyl diphosphate = N(6)-dimethylallyladenosine(37) in tRNA + diphosphate. In terms of biological role, catalyzes the transfer of a dimethylallyl group onto the adenine at position 37 in tRNAs that read codons beginning with uridine, leading to the formation of N6-(dimethylallyl)adenosine (i(6)A). The sequence is that of tRNA dimethylallyltransferase from Lactiplantibacillus plantarum (strain ATCC BAA-793 / NCIMB 8826 / WCFS1) (Lactobacillus plantarum).